The following is a 256-amino-acid chain: Alcohol dehydrogenase (256 aa).

12 to 35 (FVAGLGGIGLDTSKELVKRDLKNL) provides a ligand contact to NAD(+). Ser-140 provides a ligand contact to substrate. Catalysis depends on Tyr-153, which acts as the Proton acceptor.

Belongs to the short-chain dehydrogenases/reductases (SDR) family. In terms of assembly, homodimer.

It carries out the reaction a primary alcohol + NAD(+) = an aldehyde + NADH + H(+). It catalyses the reaction a secondary alcohol + NAD(+) = a ketone + NADH + H(+). The polypeptide is Alcohol dehydrogenase (Adh) (Drosophila yakuba (Fruit fly)).